The primary structure comprises 449 residues: Phosphoglucosamine mutase (449 aa).

Serine 100 functions as the Phosphoserine intermediate in the catalytic mechanism. Serine 100, aspartate 241, aspartate 243, and aspartate 245 together coordinate Mg(2+). Serine 100 bears the Phosphoserine mark.

Belongs to the phosphohexose mutase family. Mg(2+) serves as cofactor. In terms of processing, activated by phosphorylation.

It carries out the reaction alpha-D-glucosamine 1-phosphate = D-glucosamine 6-phosphate. Catalyzes the conversion of glucosamine-6-phosphate to glucosamine-1-phosphate. This is Phosphoglucosamine mutase from Clostridium botulinum (strain 657 / Type Ba4).